We begin with the raw amino-acid sequence, 146 residues long: Hemoglobin subunit beta (146 aa).

The residue at position 1 (Val-1) is an N-acetylvaline. Positions 2–146 constitute a Globin domain; that stretch reads HLTGEEKAAV…VANALAHKYH (145 aa). The residue at position 12 (Thr-12) is a Phosphothreonine. At Ser-44 the chain carries Phosphoserine. N6-acetyllysine is present on Lys-59. His-63 serves as a coordination point for heme b. Lys-82 is modified (N6-acetyllysine). His-92 serves as a coordination point for heme b. Cys-93 is modified (S-nitrosocysteine). Lys-144 is subject to N6-acetyllysine.

Belongs to the globin family. As to quaternary structure, heterotetramer of two alpha chains and two beta chains. In terms of tissue distribution, red blood cells.

Its function is as follows. Involved in oxygen transport from the lung to the various peripheral tissues. In Aotus trivirgatus (Three-striped night monkey), this protein is Hemoglobin subunit beta (HBB).